A 459-amino-acid polypeptide reads, in one-letter code: N,N-dimethyl phenylurea N-demethylase subunit alpha (459 aa).

Residues 55–166 form the Rieske domain; it reads WVFVAHETEI…VESYHGFIFT (112 aa). [2Fe-2S] cluster is bound by residues Cys97, His99, Cys117, and His120. Fe cation contacts are provided by His225, His230, and Asp386.

Belongs to the bacterial ring-hydroxylating dioxygenase alpha subunit family. PdmA (subunit alpha) and PdmB (subunit beta) form the oxygenase component of a bacterial Rieske non-heme iron oxygenase (RO) system. It depends on [2Fe-2S] cluster as a cofactor. The cofactor is Fe cation.

It carries out the reaction a 1,1-dimethyl-3-phenylurea + 2 reduced [2Fe-2S]-[ferredoxin] + O2 + 2 H(+) = a 1-methyl-3-phenylurea + formaldehyde + 2 oxidized [2Fe-2S]-[ferredoxin] + H2O. It catalyses the reaction isoproturon + 2 reduced [2Fe-2S]-[ferredoxin] + O2 + 2 H(+) = 1-methyl-3-[4-(propan-2-yl)phenyl]urea + formaldehyde + 2 oxidized [2Fe-2S]-[ferredoxin] + H2O. The catalysed reaction is chlorotoluron + 2 reduced [2Fe-2S]-[ferredoxin] + O2 + 2 H(+) = 3-(3-chloro-4-methylphenyl)-1-methylurea + formaldehyde + 2 oxidized [2Fe-2S]-[ferredoxin] + H2O. The enzyme catalyses metoxuron + 2 reduced [2Fe-2S]-[ferredoxin] + O2 + 2 H(+) = 3-(3-chloro-4-methoxylphenyl)-1-methylurea + formaldehyde + 2 oxidized [2Fe-2S]-[ferredoxin] + H2O. It carries out the reaction monuron + 2 reduced [2Fe-2S]-[ferredoxin] + O2 + 2 H(+) = 3-(4-chlorophenyl)-1-methylurea + formaldehyde + 2 oxidized [2Fe-2S]-[ferredoxin] + H2O. It catalyses the reaction diuron + 2 reduced [2Fe-2S]-[ferredoxin] + O2 + 2 H(+) = 3-(3,4-dichlorophenyl)-1-methylurea + formaldehyde + 2 oxidized [2Fe-2S]-[ferredoxin] + H2O. The catalysed reaction is fluometuron + 2 reduced [2Fe-2S]-[ferredoxin] + O2 + 2 H(+) = 3-[3-(trifluoromethyl)phenyl]-1-methylurea + formaldehyde + 2 oxidized [2Fe-2S]-[ferredoxin] + H2O. The enzyme catalyses fenuron + 2 reduced [2Fe-2S]-[ferredoxin] + O2 + 2 H(+) = 1-methyl-3-phenylurea + formaldehyde + 2 oxidized [2Fe-2S]-[ferredoxin] + H2O. The protein operates within xenobiotic degradation. With respect to regulation, activity is stimulated in vitro by coexpression of a [3Fe-4S]-type ferredoxin. In terms of biological role, part of the multicomponent N,N-dimethyl phenylurea N-demethylase responsible for the initial N-demethylation step during the bacterial metabolism of N,N-dimethyl-substituted phenylurea herbicides. Catalyzes the mono-N-demethylation of N,N-dimethyl-substituted phenylurea herbicides to their mono-N-demethylated derivatives. Is active on isoproturon (IPU), chlorotoluron, metoxuron, monoron, diuron, fluometuron and fenuron, but cannot transform the N-methoxy-N-methyl-substituted herbicides. The protein is N,N-dimethyl phenylurea N-demethylase subunit alpha of Sphingobium sp. (strain YBL2).